The chain runs to 267 residues: Tryptophan synthase alpha chain (267 aa).

Catalysis depends on proton acceptor residues glutamate 47 and aspartate 58.

Belongs to the TrpA family. Tetramer of two alpha and two beta chains.

The catalysed reaction is (1S,2R)-1-C-(indol-3-yl)glycerol 3-phosphate + L-serine = D-glyceraldehyde 3-phosphate + L-tryptophan + H2O. It participates in amino-acid biosynthesis; L-tryptophan biosynthesis; L-tryptophan from chorismate: step 5/5. Its function is as follows. The alpha subunit is responsible for the aldol cleavage of indoleglycerol phosphate to indole and glyceraldehyde 3-phosphate. The chain is Tryptophan synthase alpha chain from Chlorobium phaeovibrioides (strain DSM 265 / 1930) (Prosthecochloris vibrioformis (strain DSM 265)).